Consider the following 37-residue polypeptide: MKVRPSVKKICPKCKVIRRRGVLRVICENPRHKQRQG.

The protein belongs to the bacterial ribosomal protein bL36 family.

The polypeptide is Large ribosomal subunit protein bL36 (Nitratidesulfovibrio vulgaris (strain ATCC 29579 / DSM 644 / CCUG 34227 / NCIMB 8303 / VKM B-1760 / Hildenborough) (Desulfovibrio vulgaris)).